Reading from the N-terminus, the 112-residue chain is Photosystem II reaction center Psb28 protein (112 aa).

It belongs to the Psb28 family. In terms of assembly, part of the photosystem II complex.

It is found in the cellular thylakoid membrane. The polypeptide is Photosystem II reaction center Psb28 protein (Microcystis aeruginosa (strain NIES-843 / IAM M-2473)).